We begin with the raw amino-acid sequence, 397 residues long: Protein-glutamate methylesterase/protein-glutamine glutaminase of group 2 operon (397 aa).

Residues arginine 21–histidine 139 form the Response regulatory domain. Aspartate 72 is modified (4-aspartylphosphate). A CheB-type methylesterase domain is found at proline 199–valine 388. Catalysis depends on residues serine 213, histidine 241, and aspartate 337.

It belongs to the CheB family. Phosphorylated by CheA. Phosphorylation of the N-terminal regulatory domain activates the methylesterase activity.

It localises to the cytoplasm. The enzyme catalyses [protein]-L-glutamate 5-O-methyl ester + H2O = L-glutamyl-[protein] + methanol + H(+). The catalysed reaction is L-glutaminyl-[protein] + H2O = L-glutamyl-[protein] + NH4(+). In terms of biological role, involved in chemotaxis. Part of a chemotaxis signal transduction system that modulates chemotaxis in response to various stimuli. Catalyzes the demethylation of specific methylglutamate residues introduced into the chemoreceptors (methyl-accepting chemotaxis proteins or MCP) by CheR. Also mediates the irreversible deamidation of specific glutamine residues to glutamic acid. This is Protein-glutamate methylesterase/protein-glutamine glutaminase of group 2 operon from Bradyrhizobium diazoefficiens (strain JCM 10833 / BCRC 13528 / IAM 13628 / NBRC 14792 / USDA 110).